Here is a 582-residue protein sequence, read N- to C-terminus: TRAF-type zinc finger domain-containing protein 1 (582 aa).

An N-acetylalanine modification is found at Ala-2. Residues 27-103 (IHEIHCQRNI…DLELSILKLK (77 aa)) form a TRAF-type zinc finger. A Phosphoserine modification is found at Ser-191. Positions 216–238 (EEQERQERNRGQQPPKEGGEDGA) are disordered. 8 positions are modified to phosphoserine: Ser-278, Ser-320, Ser-326, Ser-327, Ser-409, Ser-415, Ser-430, and Ser-470. Disordered regions lie at residues 402 to 509 (EGIP…IAPG) and 522 to 582 (PENI…EEEE). Composition is skewed to polar residues over residues 454-471 (PFNN…STSG) and 486-504 (LNNS…SQNG).

In terms of assembly, interacts with MAVS, TICAM1, TRAF1, TRAF2, TRAF3 and TRAF6.

In terms of biological role, negative feedback regulator that controls excessive innate immune responses. Regulates both Toll-like receptor 4 (TLR4) and DDX58/RIG1-like helicases (RLH) pathways. May inhibit the LTR pathway by direct interaction with TRAF6 and attenuation of NF-kappa-B activation. May negatively regulate the RLH pathway downstream from MAVS and upstream of NF-kappa-B and IRF3. The protein is TRAF-type zinc finger domain-containing protein 1 (TRAFD1) of Macaca fascicularis (Crab-eating macaque).